The primary structure comprises 340 residues: MSAYTAPSQIAQRQLDYFNGKHVLVAGEVEDLFPLELAEHCESVSVFTSNYSYFRQIRAHSTITSYFGSQLEADSQADLLLLYWPKAKAEAEYLLAMLLAKLGSGCEIVVVGENRSGVKSIEKMFQAYGPVNKYDSARRCSFYWGQCNTQPNAFNQADWFRHYSINIHGQQLEIQSLPGVFSHGEFDLGSQLLLETLPSLSGKVLDFGCGAGVIGAFMAKRNPAIELEMCDINAYALASSEATLAANGLQGRVFASDIYSDTADDYRFIISNPPFHSGLDTNYKAAETLLGQAPQYLNKQGELIIVANSFLKYPPIIEQAFSNCATLNKTNKFSIYHASK.

Belongs to the methyltransferase superfamily. RsmC family. Monomer.

Its subcellular location is the cytoplasm. It carries out the reaction guanosine(1207) in 16S rRNA + S-adenosyl-L-methionine = N(2)-methylguanosine(1207) in 16S rRNA + S-adenosyl-L-homocysteine + H(+). Specifically methylates the guanine in position 1207 of 16S rRNA in the 30S particle. The polypeptide is Ribosomal RNA small subunit methyltransferase C (Vibrio vulnificus (strain CMCP6)).